A 506-amino-acid polypeptide reads, in one-letter code: Ecdysteroid UDP-glucosyltransferase (506 aa).

A signal peptide spans 1-18 (MTILCWLALLSTLTAVNA).

The protein belongs to the UDP-glycosyltransferase family. Post-translationally, glycosylated.

Its function is as follows. Catalyzes the transfer of glucose from UDP-glucose to ecdysteroids which are insect molting hormones. Acts on the host at the organismal level to block its development, thereby increasing the yield of progeny virus. The protein is Ecdysteroid UDP-glucosyltransferase (EGT) of Lepidoptera (butterflies and moths).